The chain runs to 78 residues: Small ribosomal subunit protein bS18 (78 aa).

Belongs to the bacterial ribosomal protein bS18 family. As to quaternary structure, part of the 30S ribosomal subunit. Forms a tight heterodimer with protein bS6.

Binds as a heterodimer with protein bS6 to the central domain of the 16S rRNA, where it helps stabilize the platform of the 30S subunit. This chain is Small ribosomal subunit protein bS18, found in Kineococcus radiotolerans (strain ATCC BAA-149 / DSM 14245 / SRS30216).